Here is a 200-residue protein sequence, read N- to C-terminus: MARGNPRKRAAAAKDKWKMKEWYIVYAPDFFGSKEIGLTPADDPEKVIGRVIETTLKDLTGDFTKGHVKLYFQVYDVKGQNAYTKFKGHTLARSYIRSLVRRRTTRVDGIFNITTKDGYKLRVMGMVIAYRRIQTSQERAIRKIIQDIIYKKAEELNFADFVLQSVNGQIASEIAKEARKIYPIKRAEVRKIKVLAEPSA.

Belongs to the eukaryotic ribosomal protein eS1 family. Part of the 30S ribosomal subunit.

This is Small ribosomal subunit protein eS1 from Thermococcus kodakarensis (strain ATCC BAA-918 / JCM 12380 / KOD1) (Pyrococcus kodakaraensis (strain KOD1)).